The chain runs to 722 residues: Probable cation-transporting ATPase HI_0290 (722 aa).

The HMA domain occupies 9 to 75 (KKISIQIGGM…IIHKTGFSAH (67 aa)). A metal cation contacts are provided by Cys-20 and Cys-23. 6 consecutive transmembrane segments (helical) span residues 94–114 (LIVLWIINIPFLIGMLGMIGG), 118–138 (LMLPPIWQFALASIVQLWLAI), 157–177 (VLVSTGTLTIYLYSAFMLFYH), 180–200 (HAMGHVYFEASVMVIGFVSLG), 340–360 (VFVPVVLVISLVTFALTYILT), and 373–393 (VLVIACPCALGLATPAAIMVG). The active-site 4-aspartylphosphate intermediate is the Asp-422. The next 4 membrane-spanning stretches (helical) occupy residues 523–543 (IWQIASIVAVSINDEPIGAFA), 608–628 (LGHIVAMVGDGINDAPALASA), 675–695 (LFFALIYNILGIPLAAFGFLS), and 697–717 (IIAGAAMALSSISVLMNALRL). Asp-617 and Asp-621 together coordinate Mg(2+).

It belongs to the cation transport ATPase (P-type) (TC 3.A.3) family. Type IB subfamily.

It is found in the cell membrane. The enzyme catalyses ATP + H2O = ADP + phosphate + H(+). The chain is Probable cation-transporting ATPase HI_0290 from Haemophilus influenzae (strain ATCC 51907 / DSM 11121 / KW20 / Rd).